Here is a 539-residue protein sequence, read N- to C-terminus: Chaperonin GroEL 1 (539 aa).

ATP contacts are provided by residues 29–32, 86–90, G413, and D495; these read TLGP and DGTTT.

The protein belongs to the chaperonin (HSP60) family. In terms of assembly, forms a cylinder of 14 subunits composed of two heptameric rings stacked back-to-back. Interacts with the co-chaperonin GroES.

It is found in the cytoplasm. It catalyses the reaction ATP + H2O + a folded polypeptide = ADP + phosphate + an unfolded polypeptide.. In terms of biological role, together with its co-chaperonin GroES, plays an essential role in assisting protein folding. The GroEL-GroES system forms a nano-cage that allows encapsulation of the non-native substrate proteins and provides a physical environment optimized to promote and accelerate protein folding. This is Chaperonin GroEL 1 from Mycobacterium bovis (strain ATCC BAA-935 / AF2122/97).